Consider the following 381-residue polypeptide: Creatine kinase M-type (381 aa).

Residues 11–98 (KLNYSAAEEF…FDPVIEDRHG (88 aa)) form the Phosphagen kinase N-terminal domain. Residues 125–367 (YVLSSRVRTG…KLMVEMEKRL (243 aa)) form the Phosphagen kinase C-terminal domain. Residues 128-132 (SSRVR), His-191, Arg-236, Arg-292, 320-325 (RGTGGV), and Asp-335 contribute to the ATP site.

This sequence belongs to the ATP:guanido phosphotransferase family. Dimer of identical or non-identical chains. With MM being the major form in skeletal muscle and myocardium, MB existing in myocardium, and BB existing in many tissues, especially brain.

Its subcellular location is the cytoplasm. It carries out the reaction creatine + ATP = N-phosphocreatine + ADP + H(+). In terms of biological role, reversibly catalyzes the transfer of phosphate between ATP and various phosphogens (e.g. creatine phosphate). Creatine kinase isoenzymes play a central role in energy transduction in tissues with large, fluctuating energy demands, such as skeletal muscle, heart, brain and spermatozoa. The sequence is that of Creatine kinase M-type from Tetronarce californica (Pacific electric ray).